The following is a 286-amino-acid chain: Glycine--tRNA ligase alpha subunit (286 aa).

The protein belongs to the class-II aminoacyl-tRNA synthetase family. Tetramer of two alpha and two beta subunits.

The protein resides in the cytoplasm. The enzyme catalyses tRNA(Gly) + glycine + ATP = glycyl-tRNA(Gly) + AMP + diphosphate. This chain is Glycine--tRNA ligase alpha subunit, found in Thermotoga neapolitana (strain ATCC 49049 / DSM 4359 / NBRC 107923 / NS-E).